Reading from the N-terminus, the 124-residue chain is Small ribosomal subunit protein bS6 (124 aa).

Residues 96–124 (ETGPSPMMKEVQREEAKKAAAAQPTEAQA) are disordered. Positions 114 to 124 (AAAAQPTEAQA) are enriched in low complexity.

The protein belongs to the bacterial ribosomal protein bS6 family.

Binds together with bS18 to 16S ribosomal RNA. This chain is Small ribosomal subunit protein bS6, found in Burkholderia lata (strain ATCC 17760 / DSM 23089 / LMG 22485 / NCIMB 9086 / R18194 / 383).